Consider the following 192-residue polypeptide: uncharacterized protein (192 aa).

The Nudix hydrolase domain maps to 29–160; the sequence is QRQAAVLIPV…PLDVYRRGNS (132 aa). The Nudix box motif lies at 67–89; it reads GAVDSTDASLIAAALREAQEEVA. E83 and E87 together coordinate Mg(2+).

It belongs to the Nudix hydrolase family. PCD1 subfamily. Requires Mn(2+) as cofactor. The cofactor is Mg(2+).

Functionally, probably mediates the hydrolysis of some nucleoside diphosphate derivatives. This is an uncharacterized protein from Salmonella dublin (strain CT_02021853).